A 397-amino-acid chain; its full sequence is Probable tRNA sulfurtransferase (397 aa).

In terms of domain architecture, THUMP spans 60 to 165 (HPVIEKLQEV…KEGTYITAYD (106 aa)). ATP contacts are provided by residues 183–184 (ML), 208–209 (HF), arginine 265, glycine 287, and glutamine 296.

This sequence belongs to the ThiI family.

The protein resides in the cytoplasm. The catalysed reaction is [ThiI sulfur-carrier protein]-S-sulfanyl-L-cysteine + a uridine in tRNA + 2 reduced [2Fe-2S]-[ferredoxin] + ATP + H(+) = [ThiI sulfur-carrier protein]-L-cysteine + a 4-thiouridine in tRNA + 2 oxidized [2Fe-2S]-[ferredoxin] + AMP + diphosphate. It catalyses the reaction [ThiS sulfur-carrier protein]-C-terminal Gly-Gly-AMP + S-sulfanyl-L-cysteinyl-[cysteine desulfurase] + AH2 = [ThiS sulfur-carrier protein]-C-terminal-Gly-aminoethanethioate + L-cysteinyl-[cysteine desulfurase] + A + AMP + 2 H(+). Its pathway is cofactor biosynthesis; thiamine diphosphate biosynthesis. Its function is as follows. Catalyzes the ATP-dependent transfer of a sulfur to tRNA to produce 4-thiouridine in position 8 of tRNAs, which functions as a near-UV photosensor. Also catalyzes the transfer of sulfur to the sulfur carrier protein ThiS, forming ThiS-thiocarboxylate. This is a step in the synthesis of thiazole, in the thiamine biosynthesis pathway. The sulfur is donated as persulfide by IscS. The sequence is that of Probable tRNA sulfurtransferase from Anoxybacillus flavithermus (strain DSM 21510 / WK1).